The following is a 331-amino-acid chain: Protein C10 (331 aa).

It belongs to the poxviridae C4/C10 protein family.

In Vaccinia virus (strain Western Reserve) (VACV), this protein is Protein C10.